Consider the following 427-residue polypeptide: 3-phosphoshikimate 1-carboxyvinyltransferase (427 aa).

3-phosphoshikimate-binding residues include K20, S21, and R25. Phosphoenolpyruvate is bound at residue K20. Residues G92 and R120 each coordinate phosphoenolpyruvate. 3-phosphoshikimate-binding residues include S165, Q167, D313, and K340. Q167 contributes to the phosphoenolpyruvate binding site. D313 acts as the Proton acceptor in catalysis. Residues R344 and R388 each coordinate phosphoenolpyruvate.

The protein belongs to the EPSP synthase family. Monomer.

The protein localises to the cytoplasm. The enzyme catalyses 3-phosphoshikimate + phosphoenolpyruvate = 5-O-(1-carboxyvinyl)-3-phosphoshikimate + phosphate. It functions in the pathway metabolic intermediate biosynthesis; chorismate biosynthesis; chorismate from D-erythrose 4-phosphate and phosphoenolpyruvate: step 6/7. Catalyzes the transfer of the enolpyruvyl moiety of phosphoenolpyruvate (PEP) to the 5-hydroxyl of shikimate-3-phosphate (S3P) to produce enolpyruvyl shikimate-3-phosphate and inorganic phosphate. This Geobacillus kaustophilus (strain HTA426) protein is 3-phosphoshikimate 1-carboxyvinyltransferase.